A 461-amino-acid chain; its full sequence is Photosystem II CP43 reaction center protein (461 aa).

Residues 1–48 lie on the Cytoplasmic side of the membrane; that stretch reads MVTLSSNSIFATNRDQESSGFAWWAGNARLINLSGKLLGAHVAHAGLI. A helical transmembrane segment spans residues 49 to 71; that stretch reads VFWAGAMTLFELAHFIPEKPMYE. Topologically, residues 72 to 111 are lumenal; it reads QGLILIPHIATLGWGVGPGGEVVDTFPFFVVGVVHLISSA. Residues 112–133 form a helical membrane-spanning segment; the sequence is VLGFGGVYHAIRGPETLEEYSS. Residues 134 to 155 lie on the Cytoplasmic side of the membrane; sequence FFGYDWKDKNKMTTILGFHLIV. A helical membrane pass occupies residues 156 to 178; the sequence is LGIGALLLVAKAMFFGGLYDTWA. The Lumenal portion of the chain corresponds to 179 to 232; the sequence is PGGGDVRVITNPTLDPRVIFGYLLKSPFGGEGWIVSVNNLEDVVGGHIWIGLIC. A helical membrane pass occupies residues 233–253; it reads IAGGIWHILTTPFGWARRAFI. Over 254–268 the chain is Cytoplasmic; that stretch reads WSGEAYLSYSLGALS. A helical transmembrane segment spans residues 269-289; sequence MMGFIATCFVWFNNTVYPSEF. At 290-424 the chain is on the lumenal side; the sequence is YGPTGPEASQ…ATSHFVLAFF (135 aa). Position 355 (glutamate 355) interacts with [CaMn4O5] cluster. The chain crosses the membrane as a helical span at residues 425-449; the sequence is FLVGHLWHAGRARAAAAGFEKGIDR. Residues 450–461 lie on the Cytoplasmic side of the membrane; sequence ESEPVLSMPSLD.

In terms of assembly, PSII is composed of 1 copy each of membrane proteins PsbA, PsbB, PsbC, PsbD, PsbE, PsbF, PsbH, PsbI, PsbJ, PsbK, PsbL, PsbM, PsbT, PsbX, PsbY, PsbZ, Psb30/Ycf12, peripheral proteins PsbO, CyanoQ (PsbQ), PsbU, PsbV and a large number of cofactors. It forms dimeric complexes. Part of a photosystem II (PSII) assembly intermediate complex PSII-I; crystallized from a strain deleted of psbJ, it forms monomeric PSII before addition of the oxygen evolving complex. PSII-I includes 3 assembly factors not found in mature PSII (Psb27, Psb28 and Psb34), and CP43 (this protein) is not in its mature conformation. Binds multiple chlorophylls and provides some of the ligands for the Ca-4Mn-5O cluster of the oxygen-evolving complex. It may also provide a ligand for a Cl- that is required for oxygen evolution. PSII binds additional chlorophylls, carotenoids and specific lipids. serves as cofactor.

It localises to the cellular thylakoid membrane. Functionally, one of the components of the core complex of photosystem II (PSII). It binds chlorophyll and helps catalyze the primary light-induced photochemical processes of PSII. PSII is a light-driven water:plastoquinone oxidoreductase, using light energy to abstract electrons from H(2)O, generating O(2) and a proton gradient subsequently used for ATP formation. The sequence is that of Photosystem II CP43 reaction center protein from Thermosynechococcus vestitus (strain NIES-2133 / IAM M-273 / BP-1).